Consider the following 334-residue polypeptide: Endochitinase 3 (334 aa).

The first 23 residues, 1 to 23 (MRLLEFTALSSLLVLFLLLAVSA), serve as a signal peptide directing secretion. The region spanning 24–65 (EQCGKQAGGARCPSGMCCSNFGWCGNTQDYCGPGKCQSQCPS) is the Chitin-binding type-1 domain. 4 disulfides stabilise this stretch: Cys26–Cys41, Cys35–Cys47, Cys40–Cys54, and Cys59–Cys63. A disordered region spans residues 64-84 (PSGPGPTPRPPTPTPGPSTGD). Pro residues predominate over residues 66 to 79 (GPGPTPRPPTPTPG). 4-hydroxyproline occurs at positions 73, 74, and 76. 3 cysteine pairs are disulfide-bonded: Cys106–Cys168, Cys180–Cys188, and Cys287–Cys319. Glu150 functions as the Proton donor in the catalytic mechanism. Positions 328-334 (GLLLETM) are cleaved as a propeptide — removed in mature form.

Belongs to the glycosyl hydrolase 19 family. Chitinase class I subfamily. The 4-hydroxyproline residues are not glycosylated in this plant vacuolar protein.

Its subcellular location is the vacuole. The catalysed reaction is Random endo-hydrolysis of N-acetyl-beta-D-glucosaminide (1-&gt;4)-beta-linkages in chitin and chitodextrins.. Its function is as follows. Defense against chitin-containing fungal pathogens. The polypeptide is Endochitinase 3 (CHN14) (Nicotiana tabacum (Common tobacco)).